The primary structure comprises 103 residues: Flagellar hook-basal body complex protein FliE (103 aa).

It belongs to the FliE family.

Its subcellular location is the bacterial flagellum basal body. The sequence is that of Flagellar hook-basal body complex protein FliE from Cronobacter sakazakii (strain ATCC BAA-894) (Enterobacter sakazakii).